We begin with the raw amino-acid sequence, 80 residues long: Putative membrane protein insertion efficiency factor (80 aa).

The tract at residues 61–80 (KTGKDPIPDHFSLKRNQEGE) is disordered. Positions 62–80 (TGKDPIPDHFSLKRNQEGE) are enriched in basic and acidic residues.

It belongs to the UPF0161 family.

The protein resides in the cell membrane. Its function is as follows. Could be involved in insertion of integral membrane proteins into the membrane. This chain is Putative membrane protein insertion efficiency factor, found in Streptococcus pneumoniae (strain CGSP14).